The following is a 270-amino-acid chain: Putative phosphoenolpyruvate synthase regulatory protein (270 aa).

149–156 (GVSRSGKT) provides a ligand contact to ADP.

Belongs to the pyruvate, phosphate/water dikinase regulatory protein family. PSRP subfamily.

The catalysed reaction is [pyruvate, water dikinase] + ADP = [pyruvate, water dikinase]-phosphate + AMP + H(+). The enzyme catalyses [pyruvate, water dikinase]-phosphate + phosphate + H(+) = [pyruvate, water dikinase] + diphosphate. In terms of biological role, bifunctional serine/threonine kinase and phosphorylase involved in the regulation of the phosphoenolpyruvate synthase (PEPS) by catalyzing its phosphorylation/dephosphorylation. This is Putative phosphoenolpyruvate synthase regulatory protein from Alteromonas mediterranea (strain DSM 17117 / CIP 110805 / LMG 28347 / Deep ecotype).